A 208-amino-acid chain; its full sequence is Troponin I, cardiac muscle (208 aa).

Disordered regions lie at residues 1–37, 54–74, and 168–208; these read MAEE…KISA, DLER…GELC, and VRKD…GGQS. Ala-2 carries the post-translational modification N-acetylalanine. The segment at 28–73 is involved in binding TNC; that stretch reads HAKRQSKISASRKLQLKTLLLQRAKRDLEREEQERAGEKQRHLGEL. Basic and acidic residues-rich tracts occupy residues 54-71 and 168-187; these read DLER…RHLG and VRKD…RKNV.

It belongs to the troponin I family. Binds to actin and tropomyosin.

Its function is as follows. Troponin I is the inhibitory subunit of troponin, the thin filament regulatory complex which confers calcium-sensitivity to striated muscle actomyosin ATPase activity. This is Troponin I, cardiac muscle (TNNI3) from Coturnix japonica (Japanese quail).